We begin with the raw amino-acid sequence, 498 residues long: N-acyl-D-aspartate deacylase (498 aa).

A disordered region spans residues Ala-478–Glu-498.

The protein belongs to the metallo-dependent hydrolases superfamily. N-acyl-D-amino-acid deacylase family. The cofactor is Zn(2+).

The protein localises to the cytoplasm. It catalyses the reaction an N-acyl-D-aspartate + H2O = D-aspartate + a carboxylate. In Alcaligenes xylosoxydans xylosoxydans (Achromobacter xylosoxidans), this protein is N-acyl-D-aspartate deacylase.